A 177-amino-acid chain; its full sequence is Acireductone dioxygenase (177 aa).

The tract at residues 1–23 (MVRAWYMDDSDADQRAPHMTDPP) is disordered. Fe(2+) is bound by residues His-86, His-88, Glu-92, and His-131. Ni(2+) is bound by residues His-86, His-88, Glu-92, and His-131.

The protein belongs to the acireductone dioxygenase (ARD) family. The cofactor is Fe(2+). Requires Ni(2+) as cofactor.

It localises to the cytoplasm. The protein resides in the nucleus. It catalyses the reaction 1,2-dihydroxy-5-(methylsulfanyl)pent-1-en-3-one + O2 = 4-methylsulfanyl-2-oxobutanoate + formate + 2 H(+). It carries out the reaction 1,2-dihydroxy-5-(methylsulfanyl)pent-1-en-3-one + O2 = 3-(methylsulfanyl)propanoate + CO + formate + 2 H(+). It functions in the pathway amino-acid biosynthesis; L-methionine biosynthesis via salvage pathway; L-methionine from S-methyl-5-thio-alpha-D-ribose 1-phosphate: step 5/6. In terms of biological role, catalyzes 2 different reactions between oxygen and the acireductone 1,2-dihydroxy-3-keto-5-methylthiopentene (DHK-MTPene) depending upon the metal bound in the active site. Fe-containing acireductone dioxygenase (Fe-ARD) produces formate and 2-keto-4-methylthiobutyrate (KMTB), the alpha-ketoacid precursor of methionine in the methionine recycle pathway. Ni-containing acireductone dioxygenase (Ni-ARD) produces methylthiopropionate, carbon monoxide and formate, and does not lie on the methionine recycle pathway. This chain is Acireductone dioxygenase, found in Branchiostoma floridae (Florida lancelet).